A 373-amino-acid chain; its full sequence is Enoyl-[acyl-carrier-protein] reductase, mitochondrial (373 aa).

A mitochondrion-targeting transit peptide spans 1–53; that stretch reads MLVSRRLTGARARAPLLASLLEAWCRQGRTTSSYSAFSEPSHVRALVYGNHGD. Lys61 is subject to N6-acetyllysine; alternate. Residue Lys61 is modified to N6-succinyllysine; alternate. Catalysis depends on Tyr94, which acts as the Proton donor. NADP(+)-binding positions include Asn167, 193-196, and 216-218; these read NSGV and RDR. An N6-acetyllysine; alternate mark is found at Lys252 and Lys267. Lys252 and Lys267 each carry N6-succinyllysine; alternate. Residues 285–288 and 310–312 each bind NADP(+); these read YGGM and FWL. Residue Lys316 is modified to N6-succinyllysine. Lys368 is a binding site for NADP(+).

This sequence belongs to the zinc-containing alcohol dehydrogenase family. Quinone oxidoreductase subfamily. Homodimer. In terms of assembly, interacts with PPARA in the nucleus and increases its activity.

Its subcellular location is the mitochondrion. The protein resides in the cytoplasm. The protein localises to the nucleus. The enzyme catalyses a 2,3-saturated acyl-[ACP] + NADP(+) = a (2E)-enoyl-[ACP] + NADPH + H(+). The catalysed reaction is (2E)-butenoyl-[ACP] + NADPH + H(+) = butanoyl-[ACP] + NADP(+). It catalyses the reaction (2E)-hexenoyl-[ACP] + NADPH + H(+) = hexanoyl-[ACP] + NADP(+). It carries out the reaction (2E)-octenoyl-[ACP] + NADPH + H(+) = octanoyl-[ACP] + NADP(+). The enzyme catalyses (2E)-decenoyl-[ACP] + NADPH + H(+) = decanoyl-[ACP] + NADP(+). The catalysed reaction is (2E)-dodecenoyl-[ACP] + NADPH + H(+) = dodecanoyl-[ACP] + NADP(+). It catalyses the reaction (2E)-tetradecenoyl-[ACP] + NADPH + H(+) = tetradecanoyl-[ACP] + NADP(+). It carries out the reaction (2E)-hexadecenoyl-[ACP] + NADPH + H(+) = hexadecanoyl-[ACP] + NADP(+). In terms of biological role, catalyzes the NADPH-dependent reduction of trans-2-enoyl thioesters in mitochondrial fatty acid synthesis (fatty acid synthesis type II). Fatty acid chain elongation in mitochondria uses acyl carrier protein (ACP) as an acyl group carrier, but the enzyme accepts both ACP and CoA thioesters as substrates in vitro. Displays a preference for medium-chain over short- and long-chain substrates. May provide the octanoyl chain used for lipoic acid biosynthesis, regulating protein lipoylation and mitochondrial respiratory activity particularly in Purkinje cells. Involved in iron homeostasis; affecting Fe-S cluster assembly and ceramide metabolism. Required for proper morphology and bioenergetic functions of mitochondria. Required for maintenance of neurons. This is Enoyl-[acyl-carrier-protein] reductase, mitochondrial (Mecr) from Rattus norvegicus (Rat).